The sequence spans 216 residues: ATP-dependent Clp protease proteolytic subunit (216 aa).

Ser101 functions as the Nucleophile in the catalytic mechanism. His126 is an active-site residue.

This sequence belongs to the peptidase S14 family. In terms of assembly, component of the chloroplastic Clp protease core complex.

The protein resides in the plastid. The protein localises to the chloroplast stroma. The catalysed reaction is Hydrolysis of proteins to small peptides in the presence of ATP and magnesium. alpha-casein is the usual test substrate. In the absence of ATP, only oligopeptides shorter than five residues are hydrolyzed (such as succinyl-Leu-Tyr-|-NHMec, and Leu-Tyr-Leu-|-Tyr-Trp, in which cleavage of the -Tyr-|-Leu- and -Tyr-|-Trp bonds also occurs).. In terms of biological role, cleaves peptides in various proteins in a process that requires ATP hydrolysis. Has a chymotrypsin-like activity. Plays a major role in the degradation of misfolded proteins. The polypeptide is ATP-dependent Clp protease proteolytic subunit (Zea mays (Maize)).